A 694-amino-acid polypeptide reads, in one-letter code: GRB2-associated-binding protein 1 (694 aa).

Ser-2 carries the N-acetylserine modification. Residues 5 to 116 enclose the PH domain; that stretch reads EVVCSGWLRK…WVRCICDICG (112 aa). Disordered regions lie at residues 122 to 164 and 194 to 231; these read EDPV…PYQL and PEPTRTHADSAKSTSSETDCNDNVPSHKNPASSQSKHG. Residues 145–157 are compositionally biased toward polar residues; sequence APPSTQADSSSAT. A compositionally biased stretch (basic and acidic residues) spans 194–203; that stretch reads PEPTRTHADS. Positions 204–231 are enriched in polar residues; that stretch reads AKSTSSETDCNDNVPSHKNPASSQSKHG. Ser-251, Ser-253, Ser-266, and Ser-304 each carry phosphoserine. Residues 323–386 form a disordered region; that stretch reads FPEGTLGQTS…TAGMSPSRSN (64 aa). Over residues 362 to 386 the composition is skewed to polar residues; it reads IPRTASDTDSSYCIPTAGMSPSRSN. Thr-387 is modified (phosphothreonine). Ser-402 and Ser-454 each carry phosphoserine. Disordered stretches follow at residues 493–532 and 544–656; these read AHMGFRSSPKTPPRRPVPVADCEPPPVDRNLKPDRKVKPA and ELQA…ADER. Ala-547 is subject to Phosphoserine. The segment covering 594 to 611 has biased composition (polar residues); sequence PNLSSEDPNLFGSNSLDG. Tyr-627 carries the phosphotyrosine modification. Phosphothreonine is present on Thr-638. Ser-651 is modified (phosphoserine). The residue at position 659 (Tyr-659) is a Phosphotyrosine. Residues 671-694 form a disordered region; the sequence is KSTREAWTDGRQSTESETPAKSVK. Residues 672–684 show a composition bias toward basic and acidic residues; the sequence is STREAWTDGRQST. Ser-683 carries the phosphoserine modification. A compositionally biased stretch (polar residues) spans 685 to 694; the sequence is ESETPAKSVK.

It belongs to the GAB family. As to quaternary structure, identified in a complex containing FRS2, GRB2, GAB1, PIK3R1 and SOS1. Forms a tripartite complex containing GAB1, METTL13 and SPRY2. Within the complex interacts with METTL13. Interacts with GRB2 and with other SH2-containing proteins. Interacts with phosphorylated LAT2. Interacts with PTPRJ. Interacts (phosphorylated) with PTPN11. Interacts with HCK. Phosphorylated in response to FGFR1 activation. Phosphorylated on tyrosine residue(s) by the epidermal growth factor receptor (EGFR) and the insulin receptor (INSR). Tyrosine phosphorylation of GAB1 mediates interaction with several proteins that contain SH2 domains. Phosphorylated on tyrosine residues by HCK upon IL6 signaling.

Its function is as follows. Adapter protein that plays a role in intracellular signaling cascades triggered by activated receptor-type kinases. Plays a role in FGFR1 signaling. Probably involved in signaling by the epidermal growth factor receptor (EGFR) and the insulin receptor (INSR). Involved in the MET/HGF-signaling pathway. This chain is GRB2-associated-binding protein 1 (GAB1), found in Homo sapiens (Human).